Consider the following 327-residue polypeptide: GMP reductase (327 aa).

Cys-175 acts as the Thioimidate intermediate in catalysis. 204 to 227 (IIADGGIRTHGDVAKSIRFGATMV) provides a ligand contact to NADP(+).

This sequence belongs to the IMPDH/GMPR family. GuaC type 2 subfamily.

It carries out the reaction IMP + NH4(+) + NADP(+) = GMP + NADPH + 2 H(+). Functionally, catalyzes the irreversible NADPH-dependent deamination of GMP to IMP. It functions in the conversion of nucleobase, nucleoside and nucleotide derivatives of G to A nucleotides, and in maintaining the intracellular balance of A and G nucleotides. In Bacillus thuringiensis subsp. konkukian (strain 97-27), this protein is GMP reductase.